Consider the following 287-residue polypeptide: F-actin-capping protein subunit beta (287 aa).

The residue at position 2 (serine 2) is an N-acetylserine. 2 positions are modified to phosphoserine: serine 85 and serine 92.

This sequence belongs to the F-actin-capping protein beta subunit family. As to quaternary structure, component of the F-actin capping complex, composed of a heterodimer of an alpha and a beta subunit. Interacts with BSP1 (via C-terminus); leading to recruitment of the F-actin capping complex to actin cortical patches and the acomyosin contractile ring.

The protein resides in the cytoplasm. It localises to the cytoskeleton. Its subcellular location is the actin patch. It is found in the bud. The protein localises to the bud tip. Functionally, F-actin-capping proteins bind in a Ca(2+)-independent manner to the fast growing ends of actin filaments (barbed end) thereby blocking the exchange of subunits at these ends. Unlike other capping proteins (such as gelsolin and severin), these proteins do not sever actin filaments. This is F-actin-capping protein subunit beta (CAP2) from Saccharomyces cerevisiae (strain ATCC 204508 / S288c) (Baker's yeast).